Consider the following 204-residue polypeptide: Proteasome subunit beta type-3-A (204 aa).

It belongs to the peptidase T1B family. Component of the 20S core complex of the 26S proteasome. The 26S proteasome is composed of a core protease (CP), known as the 20S proteasome, capped at one or both ends by the 19S regulatory particle (RP/PA700). The 20S proteasome core is composed of 28 subunits that are arranged in four stacked rings, resulting in a barrel-shaped structure. The two end rings are each formed by seven alpha subunits, and the two central rings are each formed by seven beta subunits. The catalytic chamber with the active sites is on the inside of the barrel.

It localises to the cytoplasm. The protein resides in the nucleus. Its function is as follows. Non-catalytic component of the proteasome, a multicatalytic proteinase complex which is characterized by its ability to cleave peptides with Arg, Phe, Tyr, Leu, and Glu adjacent to the leaving group at neutral or slightly basic pH. The proteasome has an ATP-dependent proteolytic activity. The sequence is that of Proteasome subunit beta type-3-A (PBC1) from Arabidopsis thaliana (Mouse-ear cress).